The primary structure comprises 297 residues: Large ribosomal subunit protein uL18 (297 aa).

Glycine 2 carries the post-translational modification N-acetylglycine. N6-acetyllysine is present on residues lysine 5 and lysine 48. Serine 185 is subject to Phosphoserine. Lysine 220 bears the N6-acetyllysine; alternate mark. Lysine 220 is covalently cross-linked (Glycyl lysine isopeptide (Lys-Gly) (interchain with G-Cter in SUMO1); alternate). A Glycyl lysine isopeptide (Lys-Gly) (interchain with G-Cter in SUMO2); alternate cross-link involves residue lysine 220. The residue at position 232 (threonine 232) is a Phosphothreonine. Residues 252-297 are disordered; the sequence is VYEKKPKKEVKKKRWNRPKMSLAQKKDRVAQKKASFLRAQERAAES. Residues 258-268 are compositionally biased toward basic residues; that stretch reads KKEVKKKRWNR. At serine 272 the chain carries Phosphoserine.

This sequence belongs to the universal ribosomal protein uL18 family. Component of the large ribosomal subunit (LSU). Part of the 5S RNP complex, which is a LSU subcomplex composed of the 5S RNA, RPL5 and RPL11. Component of a hexameric 5S RNP precursor complex, composed of 5S RNA, RRS1, RPF2/BXDC1, RPL5, RPL11 and HEATR3; this complex acts as a precursor for ribosome assembly. Interacts with NVL in an ATP-dependent manner. Interacts with RRP1B. Interacts with IPO5, IPO7 and KPNB1; these interactions may be involved in RPL5 nuclear import for the assembly of ribosomal subunits.

It is found in the cytoplasm. Its subcellular location is the nucleus. The protein localises to the nucleolus. In terms of biological role, component of the ribosome, a large ribonucleoprotein complex responsible for the synthesis of proteins in the cell. The small ribosomal subunit (SSU) binds messenger RNAs (mRNAs) and translates the encoded message by selecting cognate aminoacyl-transfer RNA (tRNA) molecules. The large subunit (LSU) contains the ribosomal catalytic site termed the peptidyl transferase center (PTC), which catalyzes the formation of peptide bonds, thereby polymerizing the amino acids delivered by tRNAs into a polypeptide chain. The nascent polypeptides leave the ribosome through a tunnel in the LSU and interact with protein factors that function in enzymatic processing, targeting, and the membrane insertion of nascent chains at the exit of the ribosomal tunnel. As part of the 5S RNP/5S ribonucleoprotein particle it is an essential component of the LSU, required for its formation and the maturation of rRNAs. It also couples ribosome biogenesis to p53/TP53 activation. As part of the 5S RNP it accumulates in the nucleoplasm and inhibits MDM2, when ribosome biogenesis is perturbed, mediating the stabilization and the activation of TP53. This chain is Large ribosomal subunit protein uL18 (RPL5), found in Bos taurus (Bovine).